The sequence spans 311 residues: L-lactate dehydrogenase 2 (311 aa).

NAD(+) contacts are provided by V14, D35, and R40. Residue R90 coordinates substrate. NAD(+) is bound by residues S103, 120–122 (ATN), and T145. Residue 122 to 125 (NPCD) participates in substrate binding. 150-153 (DTTR) is a substrate binding site. Catalysis depends on H177, which acts as the Proton acceptor. T230 contributes to the substrate binding site.

This sequence belongs to the LDH/MDH superfamily. LDH family. In terms of assembly, homotetramer.

It is found in the cytoplasm. The enzyme catalyses (S)-lactate + NAD(+) = pyruvate + NADH + H(+). It functions in the pathway fermentation; pyruvate fermentation to lactate; (S)-lactate from pyruvate: step 1/1. In terms of biological role, catalyzes the conversion of lactate to pyruvate. In Listeria monocytogenes serotype 4b (strain F2365), this protein is L-lactate dehydrogenase 2.